The following is a 431-amino-acid chain: Enolase (431 aa).

Gln167 is a (2R)-2-phosphoglycerate binding site. Catalysis depends on Glu209, which acts as the Proton donor. Asp246, Glu289, and Asp316 together coordinate Mg(2+). (2R)-2-phosphoglycerate is bound by residues Lys341, Arg370, Ser371, and Lys392. The active-site Proton acceptor is the Lys341.

Belongs to the enolase family. As to quaternary structure, component of the RNA degradosome, a multiprotein complex involved in RNA processing and mRNA degradation. It depends on Mg(2+) as a cofactor.

Its subcellular location is the cytoplasm. It is found in the secreted. It localises to the cell surface. The enzyme catalyses (2R)-2-phosphoglycerate = phosphoenolpyruvate + H2O. It participates in carbohydrate degradation; glycolysis; pyruvate from D-glyceraldehyde 3-phosphate: step 4/5. In terms of biological role, catalyzes the reversible conversion of 2-phosphoglycerate (2-PG) into phosphoenolpyruvate (PEP). It is essential for the degradation of carbohydrates via glycolysis. The protein is Enolase of Shewanella sp. (strain ANA-3).